A 203-amino-acid polypeptide reads, in one-letter code: MLALTFAMSGIAYLLGSVSNAVLISRLCDLPDPREYGSHNPGATNVLRSGNRLAALIVFLLDMLKGTIPVYLAWYLGIPPLYLGFIGIAACLGHMYPLYFHFRGGKGVATALGALLPLGLDMGSFMIVTWLIVLLFTGYSSLAAIGAALLAPLYTYCLKPEYTLPVAMLCCLIILRHHENISRLLQGHEPQVWSRHPLKRHRR.

Transmembrane regions (helical) follow at residues 4 to 24, 68 to 88, 104 to 124, and 125 to 145; these read LTFA…AVLI, IPVY…FIGI, GGKG…DMGS, and FMIV…LAAI.

This sequence belongs to the PlsY family. In terms of assembly, probably interacts with PlsX.

It localises to the cell inner membrane. The enzyme catalyses an acyl phosphate + sn-glycerol 3-phosphate = a 1-acyl-sn-glycero-3-phosphate + phosphate. The protein operates within lipid metabolism; phospholipid metabolism. Functionally, catalyzes the transfer of an acyl group from acyl-phosphate (acyl-PO(4)) to glycerol-3-phosphate (G3P) to form lysophosphatidic acid (LPA). This enzyme utilizes acyl-phosphate as fatty acyl donor, but not acyl-CoA or acyl-ACP. This chain is Glycerol-3-phosphate acyltransferase, found in Tolumonas auensis (strain DSM 9187 / NBRC 110442 / TA 4).